The chain runs to 149 residues: Cell division protein SepF (149 aa).

The disordered stretch occupies residues 12–57; it reads SNEEDDYYEEDGYEQSQQQEQQTTQQTSSQPRFVRQTTQSQTPAGL. Positions 13–24 are enriched in acidic residues; the sequence is NEEDDYYEEDGY. The segment covering 25-41 has biased composition (low complexity); sequence EQSQQQEQQTTQQTSSQ. Residues 46 to 57 are compositionally biased toward polar residues; sequence RQTTQSQTPAGL.

This sequence belongs to the SepF family. Homodimer. Interacts with FtsZ.

It localises to the cytoplasm. Functionally, cell division protein that is part of the divisome complex and is recruited early to the Z-ring. Probably stimulates Z-ring formation, perhaps through the cross-linking of FtsZ protofilaments. Its function overlaps with FtsA. The chain is Cell division protein SepF from Leuconostoc mesenteroides subsp. mesenteroides (strain ATCC 8293 / DSM 20343 / BCRC 11652 / CCM 1803 / JCM 6124 / NCDO 523 / NBRC 100496 / NCIMB 8023 / NCTC 12954 / NRRL B-1118 / 37Y).